The following is a 1226-amino-acid chain: uncharacterized protein (1226 aa).

This sequence belongs to the Mg-chelatase subunit H family.

This is an uncharacterized protein from Methanocaldococcus jannaschii (strain ATCC 43067 / DSM 2661 / JAL-1 / JCM 10045 / NBRC 100440) (Methanococcus jannaschii).